A 347-amino-acid chain; its full sequence is GMP reductase (347 aa).

108–131 contacts NADP(+); it reads TDFEKTKQILIANPALNFLCIDVA. The K(+) site is built by Gly181 and Gly183. Cys186 serves as the catalytic Thioimidate intermediate. Residue 216–239 participates in NADP(+) binding; the sequence is IISDGGCTMPGDVAKAFGGGADFV.

The protein belongs to the IMPDH/GMPR family. GuaC type 1 subfamily. As to quaternary structure, homotetramer.

It catalyses the reaction IMP + NH4(+) + NADP(+) = GMP + NADPH + 2 H(+). Its function is as follows. Catalyzes the irreversible NADPH-dependent deamination of GMP to IMP. It functions in the conversion of nucleobase, nucleoside and nucleotide derivatives of G to A nucleotides, and in maintaining the intracellular balance of A and G nucleotides. This chain is GMP reductase, found in Enterobacter sp. (strain 638).